A 505-amino-acid polypeptide reads, in one-letter code: Cytochrome P450 CYP71D313 (505 aa).

The helical transmembrane segment at 1–21 (MELQFPLFSIFFVTILFFFLF) threads the bilayer. Cysteine 441 is a binding site for heme. The helical transmembrane segment at 442-462 (PGIAFGIATIELPLALLLYHF) threads the bilayer.

The protein belongs to the cytochrome P450 family. Requires heme as cofactor.

The protein resides in the membrane. In terms of biological role, probable heme-thiolate monooxygenase. This is Cytochrome P450 CYP71D313 from Panax ginseng (Korean ginseng).